The following is a 118-amino-acid chain: Aspartate 1-decarboxylase (118 aa).

The Schiff-base intermediate with substrate; via pyruvic acid role is filled by Ser-25. Pyruvic acid (Ser) is present on Ser-25. Substrate is bound at residue Thr-57. The Proton donor role is filled by Tyr-58. Substrate is bound at residue 73-75 (GAA).

It belongs to the PanD family. In terms of assembly, heterooctamer of four alpha and four beta subunits. It depends on pyruvate as a cofactor. Is synthesized initially as an inactive proenzyme, which is activated by self-cleavage at a specific serine bond to produce a beta-subunit with a hydroxyl group at its C-terminus and an alpha-subunit with a pyruvoyl group at its N-terminus.

It is found in the cytoplasm. It catalyses the reaction L-aspartate + H(+) = beta-alanine + CO2. It participates in cofactor biosynthesis; (R)-pantothenate biosynthesis; beta-alanine from L-aspartate: step 1/1. Catalyzes the pyruvoyl-dependent decarboxylation of aspartate to produce beta-alanine. The sequence is that of Aspartate 1-decarboxylase from Leptospira biflexa serovar Patoc (strain Patoc 1 / Ames).